The chain runs to 240 residues: Ubiquinone biosynthesis O-methyltransferase (240 aa).

Residues arginine 44, glycine 64, aspartate 85, and methionine 129 each coordinate S-adenosyl-L-methionine.

Belongs to the methyltransferase superfamily. UbiG/COQ3 family.

The catalysed reaction is a 3-demethylubiquinol + S-adenosyl-L-methionine = a ubiquinol + S-adenosyl-L-homocysteine + H(+). It carries out the reaction a 3-(all-trans-polyprenyl)benzene-1,2-diol + S-adenosyl-L-methionine = a 2-methoxy-6-(all-trans-polyprenyl)phenol + S-adenosyl-L-homocysteine + H(+). It functions in the pathway cofactor biosynthesis; ubiquinone biosynthesis. O-methyltransferase that catalyzes the 2 O-methylation steps in the ubiquinone biosynthetic pathway. The chain is Ubiquinone biosynthesis O-methyltransferase from Escherichia coli O8 (strain IAI1).